The following is a 160-amino-acid chain: Vegetative-specific protein V4 (160 aa).

A run of 3 repeats spans residues 151 to 153, 154 to 156, and 157 to 159. The tract at residues 151 to 159 is 3 X 3 AA tandem repeats of N-Q-[PG]; the sequence is NQPNQPNQG.

Its function is as follows. Unknown. Its expression during growth is not required for growth but for the proper initiation of development, therefore playing a role in the transition from growth to development. This is Vegetative-specific protein V4 (lmcB) from Dictyostelium discoideum (Social amoeba).